The chain runs to 111 residues: UPF0060 membrane protein XCC2880 (111 aa).

The next 4 membrane-spanning stretches (helical) occupy residues 8-28, 34-54, 62-82, and 91-111; these read LLLFVATAVAELVGCYLPYLW, SVWLLLPAALSLAVFVWLLTL, VYAAYGGVYIATALLWLWWVD, and LLGAGCCLLGMAIIMFSPRSG.

This sequence belongs to the UPF0060 family.

Its subcellular location is the cell inner membrane. In Xanthomonas campestris pv. campestris (strain ATCC 33913 / DSM 3586 / NCPPB 528 / LMG 568 / P 25), this protein is UPF0060 membrane protein XCC2880.